A 141-amino-acid polypeptide reads, in one-letter code: Nucleoside diphosphate kinase (141 aa).

ATP contacts are provided by lysine 11, phenylalanine 59, arginine 87, threonine 93, arginine 104, and asparagine 114. Histidine 117 (pros-phosphohistidine intermediate) is an active-site residue.

The protein belongs to the NDK family. In terms of assembly, homotetramer. It depends on Mg(2+) as a cofactor.

The protein localises to the cytoplasm. The catalysed reaction is a 2'-deoxyribonucleoside 5'-diphosphate + ATP = a 2'-deoxyribonucleoside 5'-triphosphate + ADP. It catalyses the reaction a ribonucleoside 5'-diphosphate + ATP = a ribonucleoside 5'-triphosphate + ADP. In terms of biological role, major role in the synthesis of nucleoside triphosphates other than ATP. The ATP gamma phosphate is transferred to the NDP beta phosphate via a ping-pong mechanism, using a phosphorylated active-site intermediate. In Methylibium petroleiphilum (strain ATCC BAA-1232 / LMG 22953 / PM1), this protein is Nucleoside diphosphate kinase.